The primary structure comprises 526 residues: GMP synthase [glutamine-hydrolyzing] (526 aa).

Residues 3 to 199 (KVAIIDFGSQ…FIKIAGCKTD (197 aa)) enclose the Glutamine amidotransferase type-1 domain. C83 acts as the Nucleophile in catalysis. Catalysis depends on residues H174 and E176. One can recognise a GMPS ATP-PPase domain in the interval 200–392 (WTMNSFLDEQ…LGISDEILMR (193 aa)). 227–233 (SGGVDSS) serves as a coordination point for ATP.

In terms of assembly, homodimer.

The catalysed reaction is XMP + L-glutamine + ATP + H2O = GMP + L-glutamate + AMP + diphosphate + 2 H(+). Its pathway is purine metabolism; GMP biosynthesis; GMP from XMP (L-Gln route): step 1/1. In terms of biological role, catalyzes the synthesis of GMP from XMP. In Ehrlichia canis (strain Jake), this protein is GMP synthase [glutamine-hydrolyzing].